A 140-amino-acid chain; its full sequence is RxLR effector protein Avh23 (140 aa).

An N-terminal signal peptide occupies residues 1–21 (MRLTYFLTVIVVATLHAGGTA). The short motif at 54 to 72 (RMLRKVKEDTVSKKDHEER) is the RxLR-dEER element. The stretch at 100–113 (QGAFQRQNAFVNRD) is one ADA2-binding IR1 repeat. One copy of the ADA2-binding IR2 repeat lies at 114–127 (QGAFQRQNAFVKRA).

It belongs to the RxLR effector family. Interacts with host histone acetyl transferase SAGA complex subunit ADA2.

It localises to the secreted. Its subcellular location is the host nucleus. It is found in the host cytoplasm. Effector that suppresses plant defense responses during the early stages of pathogen infection. Suppresses cell death induced by effectors and PAMPs in plant hosts. Acts as a modulator of histone acetyltransferase (HAT) in plants. Avh23 binds to the ADA2 subunit of the HAT complex SAGA and disrupts its assembly by interfering with the association of ADA2 with the catalytic subunit GCN5. As such, Avh23 suppresses H3K9 acetylation mediated by the ADA2/GCN5 module and increases plant susceptibility. This is RxLR effector protein Avh23 from Phytophthora sojae (Soybean stem and root rot agent).